A 551-amino-acid chain; its full sequence is Urocanate hydratase (551 aa).

Residues 48–49, Gln126, 172–174, Glu192, Arg197, 238–239, 259–263, 269–270, and Tyr318 each bind NAD(+); these read GG, GMG, NA, QTSAH, and YI. The active site involves Cys406. Gly488 serves as a coordination point for NAD(+).

It belongs to the urocanase family. It depends on NAD(+) as a cofactor.

The protein localises to the cytoplasm. It catalyses the reaction 4-imidazolone-5-propanoate = trans-urocanate + H2O. Its pathway is amino-acid degradation; L-histidine degradation into L-glutamate; N-formimidoyl-L-glutamate from L-histidine: step 2/3. In terms of biological role, catalyzes the conversion of urocanate to 4-imidazolone-5-propionate. The sequence is that of Urocanate hydratase from Geobacillus kaustophilus (strain HTA426).